The primary structure comprises 481 residues: Alpha-ketoglutaric semialdehyde dehydrogenase 1 (481 aa).

NADP(+) is bound by residues 154–155 (WN), 178–181 (KAPE), and 231–232 (GS). The active-site Proton acceptor is glutamate 253. Residue leucine 254 coordinates NADP(+). Catalysis depends on cysteine 287, which acts as the Nucleophile. Position 384 (glutamate 384) interacts with NADP(+).

It belongs to the aldehyde dehydrogenase family. Homotetramer.

It catalyses the reaction 2,5-dioxopentanoate + NADP(+) + H2O = 2-oxoglutarate + NADPH + 2 H(+). The enzyme catalyses 2,5-dioxopentanoate + NAD(+) + H2O = 2-oxoglutarate + NADH + 2 H(+). The catalysed reaction is succinate semialdehyde + NAD(+) + H2O = succinate + NADH + 2 H(+). In terms of biological role, catalyzes the NAD(P)(+)-dependent oxidation of alpha-ketoglutaric semialdehyde (alphaKGSA) to alpha-ketoglutarate. Is involved in a degradation pathway of L-arabinose that allows A.brasilense to grow on L-arabinose as a sole carbon source. Prefers NAD(+) to NADP(+) as a cosubstrate. Displays broad substrate specificity: exhibits the highest activity with alphaKGSA and succinic semialdehyde as substrates, but to a lesser extent, is also active with glutaraldehyde, benzaldehyde, and a number of aldehydes from C3 to C8. This is Alpha-ketoglutaric semialdehyde dehydrogenase 1 (araE) from Azospirillum brasilense.